Reading from the N-terminus, the 780-residue chain is Protein phosphatase 1 regulatory subunit 21 (780 aa).

Coiled coils occupy residues 1–207 and 556–607; these read MASA…LKTL and ESRE…LKNT. The segment at 84–104 is disordered; it reads EPRGKKNKKSGESSSQLSQEQ. Residues 95 to 104 are compositionally biased toward low complexity; the sequence is ESSSQLSQEQ. Threonine 652 carries the phosphothreonine modification. Residues 693 to 742 are a coiled coil; that stretch reads YAECRALSKRLALAEKSKEALTEEMKLASQNISRLQDELTTTKRSYEDQL. The disordered stretch occupies residues 760–780; that stretch reads REEIDTLKMSSKGNSKKNKSR.

Component of the FERRY complex, composed of five subunits: TBCK, PPP1R21, FERRY3, CRYZL1 and GATAD1, with a ratio of 1:2:1:2:4 respectively. PPP1R21 serves as a binding hub connecting all five complex subunits to mediate the binding to specific mitochondrial mRNAs. Interacts with the GTP-bound form of RAB5A (via its C-terminal region); linking the mRNP complex onto trafficking endosomes for active mRNA transport. Interacts with PPP1CA.

The protein resides in the early endosome. Its function is as follows. Component of the FERRY complex (Five-subunit Endosomal Rab5 and RNA/ribosome intermediary). The FERRY complex directly interacts with mRNAs and RAB5A, and functions as a RAB5A effector involved in the localization and the distribution of specific mRNAs most likely by mediating their endosomal transport. The complex recruits mRNAs and ribosomes to early endosomes through direct mRNA-interaction. In the complex, PPP1R21 serves as a binding hub connecting all five complex subunits and mediating the binding to mRNA and early endosomes via RAB5A. Putative regulator of protein phosphatase 1 (PP1) activity. May play a role in the endosomal sorting process or in endosome maturation pathway. In Homo sapiens (Human), this protein is Protein phosphatase 1 regulatory subunit 21 (PPP1R21).